The chain runs to 217 residues: DNA-binding transcriptional activator DevR/DosR (217 aa).

The region spanning 3–119 (KVFLVDDHEV…ELARAVKDVG (117 aa)) is the Response regulatory domain. Asp54 is modified (4-aspartylphosphate). The 66-residue stretch at 143–208 (KQDPLSGLTD…QAAVFATELK (66 aa)) folds into the HTH luxR-type domain. Positions 167 to 186 (NKQIADRMFLAEKTVKNYVS) form a DNA-binding region, H-T-H motif. Residues Thr198 and Thr205 each carry the phosphothreonine; by PknH modification.

In terms of assembly, homodimer. Interacts with NarL. Phosphorylated on Asp-54 by both DevS (DosS) and DosT. Phosphorylated on Thr-198 and Thr-205 by PknH, which enhances DevR dimerization. Aspartate phosphorylation and threonine phosphorylation cooperatively enhance DevR binding to DNA.

The protein resides in the cytoplasm. The protein localises to the host cytoplasmic vesicle. It is found in the host phagosome. Its function is as follows. Member of the two-component regulatory system DevR/DevS (also called DosR/DosS) involved in onset of the dormancy response. Regulates an approximately 48-member regulon. When phosphorylated binds and activates the promoter of DevR regulon genes in response to hypoxia. The presence of target DNA increases stability of phospho-DevR in vitro. Activates its own transcription under hypoxic but not aerobic conditions, probably binds as a dimer to tandem binding sites within the devR and hspX promoters. Accepts a phosphate group from DevS (DosS) and from DosT. Does not regulate transcription of dosT. The sequence is that of DNA-binding transcriptional activator DevR/DosR from Mycobacterium tuberculosis (strain ATCC 25618 / H37Rv).